We begin with the raw amino-acid sequence, 361 residues long: tRNA/tmRNA (uracil-C(5))-methyltransferase (361 aa).

The S-adenosyl-L-methionine site is built by Gln185, Tyr213, Asn218, Glu234, and Asp294. The active-site Nucleophile is Cys319. Glu353 (proton acceptor) is an active-site residue.

This sequence belongs to the class I-like SAM-binding methyltransferase superfamily. RNA M5U methyltransferase family. TrmA subfamily.

The catalysed reaction is uridine(54) in tRNA + S-adenosyl-L-methionine = 5-methyluridine(54) in tRNA + S-adenosyl-L-homocysteine + H(+). It catalyses the reaction uridine(341) in tmRNA + S-adenosyl-L-methionine = 5-methyluridine(341) in tmRNA + S-adenosyl-L-homocysteine + H(+). Functionally, dual-specificity methyltransferase that catalyzes the formation of 5-methyluridine at position 54 (m5U54) in all tRNAs, and that of position 341 (m5U341) in tmRNA (transfer-mRNA). The chain is tRNA/tmRNA (uracil-C(5))-methyltransferase from Pseudomonas putida (strain W619).